The following is a 577-amino-acid chain: Beta-fructofuranosidase, insoluble isoenzyme 1 (577 aa).

Residues 1–22 form the signal peptide; sequence MGTRLLALAPWLLLLLLQLAGA. Asp-63 is an active-site residue. N-linked (GlcNAc...) asparagine glycosylation is found at Asn-158, Asn-183, and Asn-333.

This sequence belongs to the glycosyl hydrolase 32 family.

It localises to the secreted. The protein localises to the extracellular space. Its subcellular location is the apoplast. The protein resides in the cell wall. The catalysed reaction is Hydrolysis of terminal non-reducing beta-D-fructofuranoside residues in beta-D-fructofuranosides.. May play a role in sucrose partitioning during seed development and in stress response. The polypeptide is Beta-fructofuranosidase, insoluble isoenzyme 1 (CIN1) (Oryza sativa subsp. indica (Rice)).